Reading from the N-terminus, the 111-residue chain is Putative splicing factor C222.18 (111 aa).

An RRM domain is found at 18 to 95 (HTLYIRNFGT…DIIFVEWAKS (78 aa)).

Belongs to the splicing factor SR family.

It localises to the nucleus. In terms of biological role, has a role in pre-mRNA splicing where it is involved in spliceosome assembly. The polypeptide is Putative splicing factor C222.18 (Schizosaccharomyces pombe (strain 972 / ATCC 24843) (Fission yeast)).